The following is a 330-amino-acid chain: Carbonic anhydrase (330 aa).

Residues 1-109 (MSTASAFATN…AAARIDQITA (109 aa)) form a chloroplast transit peptide-like region.

This sequence belongs to the beta-class carbonic anhydrase family.

Its subcellular location is the cytoplasm. The catalysed reaction is hydrogencarbonate + H(+) = CO2 + H2O. Functionally, reversible hydration of carbon dioxide. This is Carbonic anhydrase from Flaveria brownii (Brown's yellowtops).